The sequence spans 952 residues: Ubiquitin carboxyl-terminal hydrolase 15 (952 aa).

At Ala-2 the chain carries N-acetylalanine. A mediates interaction with SART3 region spans residues 2-223; that stretch reads AEGGAADLDT…KNEDGTWPRG (222 aa). Residues 7–118 form the DUSP domain; that stretch reads ADLDTQRSDI…GQEPIARKVV (112 aa). Positions 260 to 904 constitute a USP domain; that stretch reads CGLSNLGNTC…AAYVLFYQRQ (645 aa). The active-site Nucleophile is Cys-269. Position 573 is a phosphothreonine (Thr-573). The interval 597-665 is disordered; it reads ETDGPLRCCE…GGDNDSENGL (69 aa). A compositionally biased stretch (acidic residues) spans 627–644; sequence METDEPDDESSQDQELPS. His-862 acts as the Proton acceptor in catalysis. The disordered stretch occupies residues 923 to 952; sequence SAATGVPLESDEDSNDNDNDLENENCMHTN. Over residues 931–945 the composition is skewed to acidic residues; the sequence is ESDEDSNDNDNDLEN. Phosphoserine is present on residues Ser-932 and Ser-936.

It belongs to the peptidase C19 family. As to quaternary structure, a homodimer structure has been reported; however it is unclear whether the protein form a homodimer in vivo. Identified in a complex with the COP9 signalosome complex (CSN). Interacts with SMAD1, SMAD2 and SMAD3; the interaction is direct. Forms a complex with SMURF2 and SMAD7. Interacts with TGFBR1. Interacts with SART3; the interaction is direct. May interact with RNF20 and RNF40. May interact with PRKN. Interacts with INCA1. In terms of processing, phosphorylated. Phosphorylation protects against ubiquitination and subsequent degradation by the proteasome. Ubiquitinated, leading to degradation by the proteasome. In terms of tissue distribution, highly expressed in testis and spleen, and at lower level in other tissues.

The protein resides in the cytoplasm. The protein localises to the nucleus. It is found in the mitochondrion. The enzyme catalyses Thiol-dependent hydrolysis of ester, thioester, amide, peptide and isopeptide bonds formed by the C-terminal Gly of ubiquitin (a 76-residue protein attached to proteins as an intracellular targeting signal).. Hydrolase that removes conjugated ubiquitin from target proteins and regulates various pathways such as the TGF-beta receptor signaling, NF-kappa-B and RNF41/NRDP1-PRKN pathways. Acts as a key regulator of TGF-beta receptor signaling pathway, but the precise mechanism is still unclear: according to a report, acts by promoting deubiquitination of monoubiquitinated R-SMADs (SMAD1, SMAD2 and/or SMAD3), thereby alleviating inhibition of R-SMADs and promoting activation of TGF-beta target genes. According to another reports, regulates the TGF-beta receptor signaling pathway by mediating deubiquitination and stabilization of TGFBR1, leading to an enhanced TGF-beta signal. Able to mediate deubiquitination of monoubiquitinated substrates, 'Lys-27'-, 'Lys-48'- and 'Lys-63'-linked polyubiquitin chains. May also regulate gene expression and/or DNA repair through the deubiquitination of histone H2B. Acts as an inhibitor of mitophagy by counteracting the action of parkin (PRKN): hydrolyzes cleavage of 'Lys-48'- and 'Lys-63'-linked polyubiquitin chains attached by parkin on target proteins such as MFN2, thereby reducing parkin's ability to drive mitophagy. Acts as an associated component of COP9 signalosome complex (CSN) and regulates different pathways via this association: regulates NF-kappa-B by mediating deubiquitination of NFKBIA and deubiquitinates substrates bound to VCP. Involved in endosome organization by mediating deubiquitination of SQSTM1: ubiquitinated SQSTM1 forms a molecular bridge that restrains cognate vesicles in the perinuclear region and its deubiquitination releases target vesicles for fast transport into the cell periphery. Acts as a negative regulator of antifungal immunity by mediating 'Lys-27'-linked deubiquitination of CARD9, thereby inactivating CARD9. The sequence is that of Ubiquitin carboxyl-terminal hydrolase 15 (Usp15) from Rattus norvegicus (Rat).